Reading from the N-terminus, the 377-residue chain is tRNA N6-adenosine threonylcarbamoyltransferase (377 aa).

Residues His129 and His133 each contribute to the Fe cation site. Substrate-binding positions include 151-155 (LVSGG), Asp184, Gly197, and Asn298. A Fe cation-binding site is contributed by Asp326. Residues 358 to 377 (DGAAAKSDPAIGSGRKGPKA) are disordered.

Belongs to the KAE1 / TsaD family. Fe(2+) is required as a cofactor.

It is found in the cytoplasm. It catalyses the reaction L-threonylcarbamoyladenylate + adenosine(37) in tRNA = N(6)-L-threonylcarbamoyladenosine(37) in tRNA + AMP + H(+). Its function is as follows. Required for the formation of a threonylcarbamoyl group on adenosine at position 37 (t(6)A37) in tRNAs that read codons beginning with adenine. Is involved in the transfer of the threonylcarbamoyl moiety of threonylcarbamoyl-AMP (TC-AMP) to the N6 group of A37, together with TsaE and TsaB. TsaD likely plays a direct catalytic role in this reaction. This is tRNA N6-adenosine threonylcarbamoyltransferase from Maricaulis maris (strain MCS10) (Caulobacter maris).